We begin with the raw amino-acid sequence, 183 residues long: Ferritin heavy chain (183 aa).

At Met-1 the chain carries N-acetylmethionine. Thr-2 carries the post-translational modification N-acetylthreonine; in Ferritin heavy chain, N-terminally processed. Residues 11–160 (QNYHQDSEAA…DHVTNLRKMG (150 aa)) enclose the Ferritin-like diiron domain. Glu-28, Glu-63, His-66, Glu-108, and Gln-142 together coordinate Fe cation. Ser-179 and Ser-183 each carry phosphoserine.

This sequence belongs to the ferritin family. As to quaternary structure, oligomer of 24 subunits. There are two types of subunits: L (light) chain and H (heavy) chain. The major chain can be light or heavy, depending on the species and tissue type. In the human liver, the heavy chain is predominant. The functional molecule forms a roughly spherical shell with a diameter of 12 nm and contains a central cavity into which the insoluble mineral iron core is deposited. Interacts with NCOA4; NCOA4 promotes targeting of the iron-binding ferritin complex to autolysosomes following starvation or iron depletion. Expressed in the liver.

It localises to the cytoplasm. The protein localises to the lysosome. The protein resides in the cytoplasmic vesicle. It is found in the autophagosome. The enzyme catalyses 4 Fe(2+) + O2 + 4 H(+) = 4 Fe(3+) + 2 H2O. Functionally, stores iron in a soluble, non-toxic, readily available form. Important for iron homeostasis. Has ferroxidase activity. Iron is taken up in the ferrous form and deposited as ferric hydroxides after oxidation. Also plays a role in delivery of iron to cells. Mediates iron uptake in capsule cells of the developing kidney. Delivery to lysosomes is mediated by the cargo receptor NCOA4 for autophagic degradation and release of iron. This Homo sapiens (Human) protein is Ferritin heavy chain (FTH1).